The sequence spans 235 residues: MKVIVVKNQLEGGKIGLDLLKKSMANGAKTLGLATGSTPVEFYNQIVNSDLDFTDMVSVNLDEYVGLDGSNDQSYRYFMTKHLFGEKPFKENFLPNGKAADLEAEAKHYDQIIEENPIDWQILGIGQNGHIGFNEPGTPAEITTHVVDLQESTIKANARFFESEADVPRKAISMGLASIMKSKNIVLMAYGKEKAEAIKGMVEGEVTTELPASILQNHANVTVIADEAAVSLLSK.

Asp62 (proton acceptor; for enolization step) is an active-site residue. Asn128 serves as the catalytic For ring-opening step. The active-site Proton acceptor; for ring-opening step is His130. The For ring-opening step role is filled by Glu135.

It belongs to the glucosamine/galactosamine-6-phosphate isomerase family. NagB subfamily.

It catalyses the reaction alpha-D-glucosamine 6-phosphate + H2O = beta-D-fructose 6-phosphate + NH4(+). Its pathway is amino-sugar metabolism; N-acetylneuraminate degradation; D-fructose 6-phosphate from N-acetylneuraminate: step 5/5. Its function is as follows. Catalyzes the reversible isomerization-deamination of glucosamine 6-phosphate (GlcN6P) to form fructose 6-phosphate (Fru6P) and ammonium ion. The sequence is that of Glucosamine-6-phosphate deaminase from Lactococcus lactis subsp. lactis (strain IL1403) (Streptococcus lactis).